An 877-amino-acid polypeptide reads, in one-letter code: Alpha-glucosidase (877 aa).

An N-terminal signal peptide occupies residues 1 to 23 (MATVGVLLLCLCLCLFAPRLCSS). The interval 89–115 (VPQDIIPRPAPGDVLHDAPPASSAPLQ) is disordered. Residues Asn-191, Asn-298, Asn-338, and Asn-391 are each glycosylated (N-linked (GlcNAc...) asparagine). Catalysis depends on residues Asp-437 and Glu-440. An N-linked (GlcNAc...) asparagine glycan is attached at Asn-471. Asp-534 (proton donor) is an active-site residue. An N-linked (GlcNAc...) asparagine glycan is attached at Asn-570.

This sequence belongs to the glycosyl hydrolase 31 family. High levels seen in the aleurone and scutellum after germination, while low levels are found in developing seeds.

The catalysed reaction is Hydrolysis of terminal, non-reducing (1-&gt;4)-linked alpha-D-glucose residues with release of alpha-D-glucose.. This chain is Alpha-glucosidase, found in Hordeum vulgare (Barley).